The primary structure comprises 149 residues: Limonene-1,2-epoxide hydrolase (149 aa).

Asp-101 functions as the Proton donor in the catalytic mechanism. Residue Asp-132 is the Proton acceptor of the active site.

It belongs to the limonene-1,2-epoxide hydrolase family. As to quaternary structure, monomer.

It catalyses the reaction limonene 1,2-epoxide + H2O = limonene-1,2-diol. The protein operates within terpene metabolism; (4R)-limonene degradation; (1S,4R)-1-hydroxylimonen-2-one from (4R)-limonene: step 2/3. In terms of biological role, catalyzes the conversion of limonene-1,2-epoxide to limonene-1,2-diol. Can use both the (-) and (+) isomers of limonene-1,2-epoxide as substrates and also has some activity with 1-methylcyclohexene oxide, cyclohexene oxide and indene oxide as substrates. The protein is Limonene-1,2-epoxide hydrolase (limA) of Rhodococcus erythropolis (Arthrobacter picolinophilus).